The chain runs to 236 residues: MARARSRSRSYSPRPRDRSPPRERKGYDDNRLRERPSSRDHESSGPSGLLIRNLPLDARPNDLRDSFERFGPLKDIYLPRNYYTGEPRGFGFVKYRYAEDAAEAMKRMNHKVIGGREIAIVFAEENRKTPQEMRTTNGTSGRHGDYKRTSHRSPRRRYRSHSRSRSPPRRESRHSKVREDDLYSPRRRSRSISRSPLPRNEREYKSRNCRSPREERVLTPIRSRCLSRSRSRSLSR.

Disordered stretches follow at residues 1–53 (MARA…LIRN) and 124–219 (EENR…RVLT). Positions 14 to 43 (RPRDRSPPRERKGYDDNRLRERPSSRDHES) are enriched in basic and acidic residues. Positions 47-125 (SGLLIRNLPL…REIAIVFAEE (79 aa)) constitute an RRM domain. Residues 149–176 (TSHRSPRRRYRSHSRSRSPPRRESRHSK) show a composition bias toward basic residues. Residue Ser184 is modified to Phosphoserine. Over residues 199–217 (RNEREYKSRNCRSPREERV) the composition is skewed to basic and acidic residues.

The protein belongs to the splicing factor SR family. SCL subfamily. Component of the spliceosome. Interacts with RS2Z33, CYP59, CYP63 and CYP95.

It is found in the nucleus speckle. Its function is as follows. Involved in intron recognition and spliceosome assembly. Probably active at the 5' splice sites. This chain is Serine/arginine-rich SC35-like splicing factor SCL28 (SCL28), found in Arabidopsis thaliana (Mouse-ear cress).